The primary structure comprises 432 residues: MEIATVVKANGGCEADRRRLRRLRCSVKDYDWGKIGSDSLVYRVYAANSDYEIDPTRPYAELWMGTHESGPSYLEDADGSNGVTLRSWITENPKSLGNRVLEKWGCDLPFLFKVLSVARPLSIQAHPDKKLAKKMHKAHPNLYKDDNHKPEMALAYTQFEALCGFIPLQELKSVIRAIPEIEELVGSEEANQVFCITEHDEEKVKSVVRTIFTLLMSADADTTKKIVSKLKRRLHMESQERQLTDKERLVLKLEKQYPNDIGVISAFFFNYVKLNPGEALYLGANEPHAYLFGECLEVMATSDNVVRAGLTSKPLDIQTLCSMLSYKLGYPEILKGTRIRPYITRYLPPFEEFEVDLCDLPSGASTVFPSVPGPSLLLVLQGEGRMSTEASADGISMGDVLFVPADTEIHLRSSSDLKLYRAGINSRFLFPL.

Position 1 is an N-acetylmethionine (Met1). Zn(2+)-binding residues include Gln124, His126, Glu151, and His288. The active site involves Arg307.

Belongs to the mannose-6-phosphate isomerase type 1 family. Zn(2+) is required as a cofactor. As to expression, constitutively expressed in both vegetative and reproductive organs under normal growth conditions (at protein level).

It carries out the reaction D-mannose 6-phosphate = D-fructose 6-phosphate. The protein operates within nucleotide-sugar biosynthesis; GDP-alpha-D-mannose biosynthesis; alpha-D-mannose 1-phosphate from D-fructose 6-phosphate: step 1/2. Inhibited by EDTA, Zn(2+), Cd(2+), Co(2+), p-chloromercuribenzoate and L-ascorbic acid (AsA). In terms of biological role, phosphomannose isomerase involved in the synthesis of the GDP-mannose and dolichol-phosphate-mannose required for a number of critical mannosyl transfer reactions. Involved in the ascorbic acid (AsA) biosynthesis. Required during the endosperm development. The protein is Mannose-6-phosphate isomerase 1 (PMI1) of Arabidopsis thaliana (Mouse-ear cress).